We begin with the raw amino-acid sequence, 216 residues long: Protein-methionine-sulfoxide reductase heme-binding subunit MsrQ (216 aa).

A run of 5 helical transmembrane segments spans residues 16–36, 48–68, 82–102, 119–139, and 155–175; these read IWAL…LGAT, EHLL…ITPI, ALGL…MVLD, FITI…TSNI, and LVYV…KVVG.

This sequence belongs to the MsrQ family. In terms of assembly, heterodimer of a catalytic subunit (MsrP) and a heme-binding subunit (MsrQ). It depends on FMN as a cofactor. The cofactor is heme b.

It is found in the cell inner membrane. Part of the MsrPQ system that repairs oxidized periplasmic proteins containing methionine sulfoxide residues (Met-O), using respiratory chain electrons. Thus protects these proteins from oxidative-stress damage caused by reactive species of oxygen and chlorine generated by the host defense mechanisms. MsrPQ is essential for the maintenance of envelope integrity under bleach stress, rescuing a wide series of structurally unrelated periplasmic proteins from methionine oxidation. MsrQ provides electrons for reduction to the reductase catalytic subunit MsrP, using the quinone pool of the respiratory chain. This chain is Protein-methionine-sulfoxide reductase heme-binding subunit MsrQ, found in Rhizobium meliloti (strain 1021) (Ensifer meliloti).